We begin with the raw amino-acid sequence, 74 residues long: Large ribosomal subunit protein bL31 (74 aa).

The protein belongs to the bacterial ribosomal protein bL31 family. Type A subfamily. In terms of assembly, part of the 50S ribosomal subunit.

In terms of biological role, binds the 23S rRNA. The protein is Large ribosomal subunit protein bL31 of Xanthobacter autotrophicus (strain ATCC BAA-1158 / Py2).